The following is a 253-amino-acid chain: Diphthine synthase (253 aa).

S-adenosyl-L-methionine is bound by residues aspartate 83, leucine 86, 111–112 (SI), leucine 163, and leucine 205.

This sequence belongs to the diphthine synthase family. As to quaternary structure, homodimer.

It catalyses the reaction 2-[(3S)-amino-3-carboxypropyl]-L-histidyl-[translation elongation factor 2] + 3 S-adenosyl-L-methionine = diphthine-[translation elongation factor 2] + 3 S-adenosyl-L-homocysteine + 3 H(+). It participates in protein modification; peptidyl-diphthamide biosynthesis. S-adenosyl-L-methionine-dependent methyltransferase that catalyzes the trimethylation of the amino group of the modified target histidine residue in translation elongation factor 2 (EF-2), to form an intermediate called diphthine. The three successive methylation reactions represent the second step of diphthamide biosynthesis. The chain is Diphthine synthase from Pyrobaculum neutrophilum (strain DSM 2338 / JCM 9278 / NBRC 100436 / V24Sta) (Thermoproteus neutrophilus).